Here is a 198-residue protein sequence, read N- to C-terminus: Ribosome maturation factor RimP (198 aa).

The protein belongs to the RimP family.

The protein resides in the cytoplasm. Its function is as follows. Required for maturation of 30S ribosomal subunits. The polypeptide is Ribosome maturation factor RimP (Rhizobium rhizogenes (strain K84 / ATCC BAA-868) (Agrobacterium radiobacter)).